Here is a 172-residue protein sequence, read N- to C-terminus: Large ribosomal subunit protein bL17 (172 aa).

The disordered stretch occupies residues 127–172 (KAAKQDRAKRVKGSKKVTGDVAPAVAPVPSAPAETQEEAKAPESAE). Residues 147 to 159 (VAPAVAPVPSAPA) are compositionally biased toward low complexity. The span at 163-172 (EEAKAPESAE) shows a compositional bias: basic and acidic residues.

This sequence belongs to the bacterial ribosomal protein bL17 family. Part of the 50S ribosomal subunit. Contacts protein L32.

The polypeptide is Large ribosomal subunit protein bL17 (Chlorobium luteolum (strain DSM 273 / BCRC 81028 / 2530) (Pelodictyon luteolum)).